A 244-amino-acid chain; its full sequence is Orotidine 5'-phosphate decarboxylase (244 aa).

Substrate is bound by residues aspartate 12, lysine 34, 61–70 (DLKLFDIPNT), threonine 125, arginine 187, glutamine 196, glycine 216, and arginine 217. Lysine 63 functions as the Proton donor in the catalytic mechanism.

It belongs to the OMP decarboxylase family. Type 1 subfamily. As to quaternary structure, homodimer.

It catalyses the reaction orotidine 5'-phosphate + H(+) = UMP + CO2. The protein operates within pyrimidine metabolism; UMP biosynthesis via de novo pathway; UMP from orotate: step 2/2. In terms of biological role, catalyzes the decarboxylation of orotidine 5'-monophosphate (OMP) to uridine 5'-monophosphate (UMP). The polypeptide is Orotidine 5'-phosphate decarboxylase (Dictyoglomus thermophilum (strain ATCC 35947 / DSM 3960 / H-6-12)).